A 496-amino-acid polypeptide reads, in one-letter code: L-arabinose isomerase (496 aa).

4 residues coordinate Mn(2+): glutamate 305, glutamate 330, histidine 347, and histidine 446.

Belongs to the arabinose isomerase family. The cofactor is Mn(2+).

It carries out the reaction beta-L-arabinopyranose = L-ribulose. Its pathway is carbohydrate degradation; L-arabinose degradation via L-ribulose; D-xylulose 5-phosphate from L-arabinose (bacterial route): step 1/3. Its function is as follows. Catalyzes the conversion of L-arabinose to L-ribulose. The chain is L-arabinose isomerase from Bacillus subtilis (strain 168).